A 72-amino-acid polypeptide reads, in one-letter code: uncharacterized protein (72 aa).

This is an uncharacterized protein from Saccharomyces cerevisiae (strain ATCC 204508 / S288c) (Baker's yeast).